Reading from the N-terminus, the 191-residue chain is Probable protein adenylyltransferase HI_0977 (191 aa).

Positions Gly-37–Gln-162 constitute a Fido domain. Residues Lys-67–Gly-68, Gly-112–Gly-114, Arg-118, and Gln-145 each bind ATP.

The protein belongs to the fic family.

It catalyses the reaction L-tyrosyl-[protein] + ATP = O-(5'-adenylyl)-L-tyrosyl-[protein] + diphosphate. The catalysed reaction is L-threonyl-[protein] + ATP = 3-O-(5'-adenylyl)-L-threonyl-[protein] + diphosphate. In terms of biological role, probable adenylyltransferase that mediates the addition of adenosine 5'-monophosphate (AMP) to specific residues of target proteins. The chain is Probable protein adenylyltransferase HI_0977 from Haemophilus influenzae (strain ATCC 51907 / DSM 11121 / KW20 / Rd).